Consider the following 260-residue polypeptide: Snake venom serine protease Dav-X (260 aa).

The N-terminal stretch at 1–18 (MVLIRVLANLLILQLSYA) is a signal peptide. Residues 19–24 (QKSSEL) constitute a propeptide that is removed on maturation. A Peptidase S1 domain is found at 25–251 (VIGGVECDIN…YTDWIQNIIA (227 aa)). Intrachain disulfides connect C31–C165, C52–C68, C102–C258, C144–C212, C176–C191, and C202–C227. The active-site Charge relay system is H67. A glycan (N-linked (GlcNAc...) asparagine) is linked at N81. D112 (charge relay system) is an active-site residue. N-linked (GlcNAc...) asparagine glycans are attached at residues N124 and N172. The Charge relay system role is filled by S206. The N-linked (GlcNAc...) asparagine glycan is linked to N241.

It belongs to the peptidase S1 family. Snake venom subfamily. As to quaternary structure, monomer. As to expression, expressed by the venom gland.

Its subcellular location is the secreted. Snake venom serine protease that may act in the hemostasis system of the prey. The sequence is that of Snake venom serine protease Dav-X from Deinagkistrodon acutus (Hundred-pace snake).